Reading from the N-terminus, the 85-residue chain is MKVTLIAILTCAAVLVLHTTAAEELEAEGQLMEVGMPDTELAAVDEERLFECSVSCEIEKEGNKDCKKKKCKGGWKCKFNMCVKV.

Residues 1–22 (MKVTLIAILTCAAVLVLHTTAA) form the signal peptide. Positions 23–48 (EELEAEGQLMEVGMPDTELAAVDEER) are excised as a propeptide. Disulfide bonds link cysteine 52–cysteine 66, cysteine 56–cysteine 77, and cysteine 71–cysteine 82.

This sequence belongs to the neurotoxin 12 (Hwtx-2) family. 02 (Hwtx-2) subfamily. In terms of assembly, monomer. As to expression, expressed by the venom gland.

It is found in the secreted. Its function is as follows. Neurotoxin active on both insects and mammals. This chain is U4-theraphotoxin-Hhn1a, found in Cyriopagopus hainanus (Chinese bird spider).